The sequence spans 445 residues: Na(+)-translocating NADH-quinone reductase subunit A (445 aa).

The protein belongs to the NqrA family. As to quaternary structure, composed of six subunits; NqrA, NqrB, NqrC, NqrD, NqrE and NqrF.

The enzyme catalyses a ubiquinone + n Na(+)(in) + NADH + H(+) = a ubiquinol + n Na(+)(out) + NAD(+). Functionally, NQR complex catalyzes the reduction of ubiquinone-1 to ubiquinol by two successive reactions, coupled with the transport of Na(+) ions from the cytoplasm to the periplasm. NqrA to NqrE are probably involved in the second step, the conversion of ubisemiquinone to ubiquinol. This is Na(+)-translocating NADH-quinone reductase subunit A from Marinomonas sp. (strain MWYL1).